The sequence spans 356 residues: MTYEVAIVGASGYTGGELLRVLAVHPDVNVKVVTSREYANKPVYYAHPHLRGIYPASLKFKRLDDPDQLSDVVGDVDLVFLALPHKVSLHYVPKALEVGYKVVDLSADYRLKRVEDYKTWYGYEHPYPDLLEKAVYGLPELYGDKIRGAQLVANPGCNATSSILAVLPPAAERIIDLDRIVVDVKVGSSEAGAKPYRGGHHPEREGTARPYDAEGHRHVAELEQVIRDYTGRDVKVGFTPHAVSMIRGSLASAYSWLTKDLAPLDVQRIYAKYYAGKKFVKIVRGAPMPYPDVKNVYGSNYAEVGFALDKRVGRLAMFAAIDNLMKGAAGTAVQNMNLMLGMDEDEGLKNLVPVRP.

11 to 14 (SGYT) lines the NADP(+) pocket. Cys157 is a catalytic residue. Asn323 lines the NADP(+) pocket.

This sequence belongs to the NAGSA dehydrogenase family. Type 1 subfamily. LysY sub-subfamily.

The protein localises to the cytoplasm. It catalyses the reaction [amino-group carrier protein]-C-terminal-N-(1-carboxy-5-oxopentan-1-yl)-L-glutamine + phosphate + NADP(+) = [amino-group carrier protein]-C-terminal-N-(1-carboxy-5-phosphooxy-5-oxopentan-1-yl)-L-glutamine + NADPH + H(+). It carries out the reaction [amino-group carrier protein]-C-terminal-gamma-(L-glutamyl-5-semialdehyde)-L-glutamate + phosphate + NADP(+) = [amino-group carrier protein]-C-terminal-gamma-(5-phospho-L-glutamyl)-L-glutamate + NADPH + H(+). It participates in amino-acid biosynthesis; L-lysine biosynthesis via AAA pathway; L-lysine from L-alpha-aminoadipate (Thermus route): step 3/5. The protein operates within amino-acid biosynthesis; L-arginine biosynthesis. Its function is as follows. Involved in both the arginine and lysine biosynthetic pathways. The chain is Putative [LysW]-L-2-aminoadipate/[LysW]-L-glutamate phosphate reductase from Ignicoccus hospitalis (strain KIN4/I / DSM 18386 / JCM 14125).